Reading from the N-terminus, the 356-residue chain is DNA polymerase IV (356 aa).

Residues 6–187 enclose the UmuC domain; the sequence is IIHIDMDYFF…LDIGDFPGVG (182 aa). Positions 10 and 105 each coordinate Mg(2+). Glu-106 is a catalytic residue.

This sequence belongs to the DNA polymerase type-Y family. As to quaternary structure, monomer. Mg(2+) serves as cofactor.

The protein localises to the cytoplasm. The catalysed reaction is DNA(n) + a 2'-deoxyribonucleoside 5'-triphosphate = DNA(n+1) + diphosphate. Functionally, poorly processive, error-prone DNA polymerase involved in untargeted mutagenesis. Copies undamaged DNA at stalled replication forks, which arise in vivo from mismatched or misaligned primer ends. These misaligned primers can be extended by PolIV. Exhibits no 3'-5' exonuclease (proofreading) activity. May be involved in translesional synthesis, in conjunction with the beta clamp from PolIII. The protein is DNA polymerase IV of Staphylococcus aureus (strain COL).